A 145-amino-acid chain; its full sequence is Transcriptional regulator MraZ (145 aa).

SpoVT-AbrB domains follow at residues 5 to 47 (EHQH…PLPE) and 76 to 119 (AVEC…AKDQ).

It belongs to the MraZ family. In terms of assembly, forms oligomers.

The protein resides in the cytoplasm. It is found in the nucleoid. The chain is Transcriptional regulator MraZ from Pelotomaculum thermopropionicum (strain DSM 13744 / JCM 10971 / SI).